We begin with the raw amino-acid sequence, 589 residues long: ATP-dependent ubiquitin transferase-like protein Cap2 (589 aa).

Cysteine 13 is covalently cross-linked (Glycyl cysteine dithioester (Cys-Gly) (interchain with G-Cter in DncV)). A Glycyl lysine isopeptide (Lys-Gly) (interchain with G-Cter in DncV) cross-link involves residue lysine 77. Cysteine 91 functions as the For E2-like domain in the catalytic mechanism. Residues lysine 305, lysine 387, and lysine 484 each participate in a glycyl lysine isopeptide (Lys-Gly) (interchain with G-Cter in DncV) cross-link. Cysteine 493 is covalently cross-linked (Glycyl cysteine dithioester (Cys-Gly) (interchain with G-Cter in DncV)). Active-site for E1-like domain residues include cysteine 493, cysteine 496, and cysteine 513. Cysteine 513 is covalently cross-linked (Glycyl cysteine dithioester (Cys-Gly) (interchain with G-Cter in DncV)). A Glycyl lysine isopeptide (Lys-Gly) (interchain with G-Cter in DncV) cross-link involves residue lysine 523.

This sequence in the C-terminal section; belongs to the HesA/MoeB/ThiF family. A Cap2 dimer is bound on either side by a DncV monomer. Conjugated to DncV via 5 different Lys residues and 3 Cys residues.

Its function is as follows. CD-NTase priming component of a CBASS antiviral system. CBASS (cyclic oligonucleotide-based antiphage signaling system) provides immunity against bacteriophages. The CD-NTase protein (DncV) synthesizes cyclic nucleotides in response to infection; these serve as specific second messenger signals. The signals activate a diverse range of effectors, leading to bacterial cell death and thus abortive phage infection. A type II-A(GA) CBASS system. Conjugates DncV to itself in vitro and to other cellular proteins in vivo; conjugation requires ATP. This primes DncV, upon phage infection CdnA activates and makes cyclic nucleotides. Functionally, protects E.coli against phage infection. When capV and dncV are introduced in E.coli MG1655 there is 1000-fold protection against phage P1; protection against other phage (T2, T4, T5, T6 and lambda-vir) requires the 2 subsequent genes. In another paper the capV-dncV-cap2-cap3 operon gives 10(4)-10(5)-fold protection against phages lambda, T2, T4 and T6, about 1000-fold protection against P1 and 10-fold protection against T5. This is ATP-dependent ubiquitin transferase-like protein Cap2 from Escherichia coli (strain TW11681).